The sequence spans 109 residues: Spermidine export protein MdtI (109 aa).

4 helical membrane-spanning segments follow: residues 6–26 (WIHA…NVFL), 36–56 (VYGI…SQAV), 64–84 (AYAL…WVLF), and 88–108 (LNNK…LIKL).

The protein belongs to the drug/metabolite transporter (DMT) superfamily. Small multidrug resistance (SMR) (TC 2.A.7.1) family. MdtI subfamily. In terms of assembly, forms a complex with MdtJ.

The protein localises to the cell inner membrane. Catalyzes the excretion of spermidine. This is Spermidine export protein MdtI from Klebsiella pneumoniae (strain 342).